The following is a 549-amino-acid chain: Probable protein kinase UbiB (549 aa).

Residues 123–501 (NFDDTPLASA…QQKAHKSNYL (379 aa)) form the Protein kinase domain. ATP is bound by residues 129-137 (LASASISQV) and K152. D287 serves as the catalytic Proton acceptor. Helical transmembrane passes span 498–518 (SNYL…LFSQ) and 520–540 (ATLW…LLGW).

Belongs to the ABC1 family. UbiB subfamily.

The protein localises to the cell inner membrane. It participates in cofactor biosynthesis; ubiquinone biosynthesis [regulation]. In terms of biological role, is probably a protein kinase regulator of UbiI activity which is involved in aerobic coenzyme Q (ubiquinone) biosynthesis. The sequence is that of Probable protein kinase UbiB from Shewanella loihica (strain ATCC BAA-1088 / PV-4).